A 226-amino-acid chain; its full sequence is Apoptosis regulator OPG045 (226 aa).

The protein belongs to the orthopoxvirus OPG045 family. As to quaternary structure, homodimer. Interacts with host pro-apoptotic protein BCL2L11 (via BH3 domain). Interacts with host NLRP1. Interacts with host BAK.

It is found in the host mitochondrion outer membrane. Its subcellular location is the host cytoplasm. Functionally, plays a role in evading host innate immune response by inhibiting host inflammasome activation. Interacts with and inhibits NLR-mediated interleukin-1 beta/IL1B production in infected cells. At the host mitochondria outer membrane, interacts with the BH3 domain of host BAK and prevents BAK from binding active BAX. In turn, host apoptosis is inhibited. The chain is Apoptosis regulator OPG045 (OPG045) from Homo sapiens (Human).